The chain runs to 366 residues: Isocitrate dehydrogenase [NAD] subunit alpha, mitochondrial (366 aa).

The transit peptide at 1–27 directs the protein to the mitochondrion; it reads MAGPAWISKVSRLLGAFHNQKQVTRGF. The residue at position 77 (lysine 77) is an N6-succinyllysine. Position 101 is a phosphothreonine (threonine 101). The substrate site is built by arginine 115, arginine 125, and arginine 146. Lysine 223 bears the N6-acetyllysine mark. Mg(2+)-binding residues include aspartate 233, aspartate 257, and aspartate 261. Lysine 343 is subject to N6-acetyllysine; alternate. An N6-succinyllysine; alternate modification is found at lysine 343. Lysine 350 is modified (N6-succinyllysine).

It belongs to the isocitrate and isopropylmalate dehydrogenases family. As to quaternary structure, heterooligomer of subunits alpha (IDH3A), beta (IDH3B), and gamma (IDH3G) in the apparent ratio of 2:1:1. The heterodimer containing one IDH3A and one IDH3B subunit and the heterodimer containing one IDH3A and one IDH3G subunit assemble into a heterotetramer (which contains two subunits of IDH3A, one of IDH3B and one of IDH3G) and further into the heterooctamer. Requires Mg(2+) as cofactor. The cofactor is Mn(2+).

The protein resides in the mitochondrion. The catalysed reaction is D-threo-isocitrate + NAD(+) = 2-oxoglutarate + CO2 + NADH. With respect to regulation, the heterotetramer and the heterodimer composed of IDH3A and IDH3G subunits can be allosterically activated by citrate (CIT) or/and ADP, and the two activators can act independently or synergistically. The heterodimer composed of IDH3A and IDH3B subunits cannot be allosterically regulated and the allosteric regulation of the heterotetramer is through the IDH3G subunit and not the IDH3B subunit. The IDH3G subunit contains the allosteric site which consists of a CIT-binding site and an ADP-binding site, and the binding of CIT and ADP causes conformational changes at the allosteric site which are transmitted to the active site in the catalytic subunit (IDH3A) through a cascade of conformational changes at the heterodimer interface, leading to stabilization of the isocitrate-binding at the active site and thus activation of the enzyme. ATP can activate the heterotetramer and the heterodimer composed of IDH3A and IDH3G subunits at low concentrations but inhibits their activities at high concentrations, whereas ATP exhibits only inhibitory effect on the heterodimer composed of IDH3A and IDH3B subunits. In terms of biological role, catalytic subunit of the enzyme which catalyzes the decarboxylation of isocitrate (ICT) into alpha-ketoglutarate. The heterodimer composed of the alpha (IDH3A) and beta (IDH3B) subunits and the heterodimer composed of the alpha (IDH3A) and gamma (IDH3G) subunits, have considerable basal activity but the full activity of the heterotetramer (containing two subunits of IDH3A, one of IDH3B and one of IDH3G) requires the assembly and cooperative function of both heterodimers. This chain is Isocitrate dehydrogenase [NAD] subunit alpha, mitochondrial (IDH3A), found in Sus scrofa (Pig).